The chain runs to 220 residues: WAP four-disulfide core domain protein 1 (220 aa).

Positions 1 to 31 (MPLTGVGPGSCRRQIIRALCLLLLLLHAGSA) are cleaved as a signal peptide. The disordered stretch occupies residues 46 to 70 (KSRAEEAGAPGGPRQPRADRCPPPP). The WAP domain occupies 59 to 108 (RQPRADRCPPPPRTLPPGACQAARCQADSECPRHRRCCYNGCAYACLEAV). 4 disulfide bridges follow: Cys66-Cys96, Cys78-Cys100, Cys83-Cys95, and Cys89-Cys104. A disordered region spans residues 199 to 220 (EYPEGDSKNVAEPGRGQQKHFQ).

The protein resides in the secreted. Has growth inhibitory activity. The polypeptide is WAP four-disulfide core domain protein 1 (WFDC1) (Homo sapiens (Human)).